Reading from the N-terminus, the 638-residue chain is Neuroendocrine convertase 2 (638 aa).

The signal sequence occupies residues 1–25; it reads MRGGCISQGKAAAGLLFCVMVFASA. Positions 26–109 are excised as a propeptide; that stretch reads ERPVFTNHFL…QQEGFNRKKR (84 aa). Residues 129 to 453 enclose the Peptidase S8 domain; sequence QWYLINTGQA…YGVLDAGAMV (325 aa). Residues Asp-167 and His-208 each act as charge relay system in the active site. Cystine bridges form between Cys-225-Cys-376 and Cys-317-Cys-347. Asn-375 is a glycosylation site (N-linked (GlcNAc...) asparagine). Ser-384 functions as the Charge relay system in the catalytic mechanism. The P/Homo B domain occupies 461–597; it reads TVPERFHCVG…TLMLHGTQSA (137 aa). A disulfide bridge connects residues Cys-468 and Cys-494. N-linked (GlcNAc...) asparagine glycosylation is found at Asn-514 and Asn-524.

It belongs to the peptidase S8 family. Furin subfamily.

The protein localises to the cytoplasmic vesicle. It is found in the secretory vesicle. Its subcellular location is the secreted. The catalysed reaction is Release of protein hormones and neuropeptides from their precursors, generally by hydrolysis of -Lys-Arg-|- bonds.. Its function is as follows. Serine endopeptidase which is involved in the processing of hormone and other protein precursors at sites comprised of pairs of basic amino acid residues. Responsible for the release of glucagon from proglucagon in pancreatic A cells. This chain is Neuroendocrine convertase 2 (PCSK2), found in Bos taurus (Bovine).